Reading from the N-terminus, the 511-residue chain is Coatomer subunit delta (511 aa).

The span at Gln168 to Gly177 shows a compositional bias: basic and acidic residues. The segment at Gln168–Ser188 is disordered. Residue Ser223 is modified to Phosphoserine. An N6-acetyllysine mark is found at Lys233 and Lys241. Phosphoserine is present on Ser244. The 241-residue stretch at Met271–Leu511 folds into the MHD domain. N6-acetyllysine occurs at positions 309 and 351. A Phosphoserine modification is found at Ser493.

The protein belongs to the adaptor complexes medium subunit family. Delta-COP subfamily. Oligomeric complex that consists of at least the alpha, beta, beta', gamma, delta, epsilon and zeta subunits.

The protein resides in the cytoplasm. It localises to the golgi apparatus membrane. Its subcellular location is the cytoplasmic vesicle. It is found in the COPI-coated vesicle membrane. Functionally, the coatomer is a cytosolic protein complex that binds to dilysine motifs and reversibly associates with Golgi non-clathrin-coated vesicles, which further mediate biosynthetic protein transport from the ER, via the Golgi up to the trans Golgi network. Coatomer complex is required for budding from Golgi membranes, and is essential for the retrograde Golgi-to-ER transport of dilysine-tagged proteins. In mammals, the coatomer can only be recruited by membranes associated to ADP-ribosylation factors (ARFs), which are small GTP-binding proteins; the complex also influences the Golgi structural integrity, as well as the processing, activity, and endocytic recycling of LDL receptors. This chain is Coatomer subunit delta (Arcn1), found in Mus musculus (Mouse).